We begin with the raw amino-acid sequence, 257 residues long: Pyridoxine 5'-phosphate synthase (257 aa).

Asparagine 6 is a 3-amino-2-oxopropyl phosphate binding site. 8–9 (DH) contributes to the 1-deoxy-D-xylulose 5-phosphate binding site. Arginine 17 contributes to the 3-amino-2-oxopropyl phosphate binding site. Catalysis depends on histidine 41, which acts as the Proton acceptor. 1-deoxy-D-xylulose 5-phosphate-binding residues include arginine 43 and histidine 48. Glutamate 68 acts as the Proton acceptor in catalysis. Threonine 98 is a 1-deoxy-D-xylulose 5-phosphate binding site. Histidine 210 functions as the Proton donor in the catalytic mechanism. 3-amino-2-oxopropyl phosphate contacts are provided by residues glycine 211 and 232–233 (GQ).

The protein belongs to the PNP synthase family. Homooctamer; tetramer of dimers.

The protein resides in the cytoplasm. It carries out the reaction 3-amino-2-oxopropyl phosphate + 1-deoxy-D-xylulose 5-phosphate = pyridoxine 5'-phosphate + phosphate + 2 H2O + H(+). Its pathway is cofactor biosynthesis; pyridoxine 5'-phosphate biosynthesis; pyridoxine 5'-phosphate from D-erythrose 4-phosphate: step 5/5. In terms of biological role, catalyzes the complicated ring closure reaction between the two acyclic compounds 1-deoxy-D-xylulose-5-phosphate (DXP) and 3-amino-2-oxopropyl phosphate (1-amino-acetone-3-phosphate or AAP) to form pyridoxine 5'-phosphate (PNP) and inorganic phosphate. The sequence is that of Pyridoxine 5'-phosphate synthase from Campylobacter jejuni subsp. jejuni serotype O:2 (strain ATCC 700819 / NCTC 11168).